A 206-amino-acid polypeptide reads, in one-letter code: Bacterial microcompartment protein trimer-3 (206 aa).

2 BMC circularly permuted domains span residues 2-104 (ELRA…RLAP) and 105-206 (RVVS…DNRG). The short motif at 67 to 68 (ER) is the Pore gating residues element.

This sequence belongs to the EutL/PduB family. As to quaternary structure, homotrimerizes to form a pseudohexamer. These stack, with the concave faces together, with the concave faces together, in purified bacterial microcompartments (BMC).

The protein localises to the bacterial microcompartment. A minor component of the bacterial microcompartment (BMC) shell. Expression of 5 proteins in E.coli (BMC-H (Hoch_5815), BMC-P (Hoch_5814), and 3 BMC-T (Hoch_5812, Hoch_5816, Hoch_3341)) forms 40 nm artificial BMCs with a molecular mass of 6.5 MDa. One of 2 stacked pseudohexamers in the BMC. There are 20 BMC-T pseudohexamers per BMC, composed of mixed BMC-T1, BMC-T2 and BMC-T3. The shell facets are 20-30 Angstroms thick, with 1 of the stacked BMC-T trimers protruding to the exterior. The stacked trimers may serve as conduits to allow metabolite flux across the protein shell, gated by Arg-68 which contacts Glu-67 in an adjacent subunit; they are flexible enough to play a role in accommodating variations in shell assembly. The chain is Bacterial microcompartment protein trimer-3 from Haliangium ochraceum (strain DSM 14365 / JCM 11303 / SMP-2).